Reading from the N-terminus, the 469-residue chain is Sorting and assembly machinery component 50 homolog (469 aa).

Residues 45–125 form the POTRA domain; sequence VVVQHVHFDG…LDVTFEVTEL (81 aa). An N6-methyllysine modification is found at K255.

Belongs to the SAM50/omp85 family. Associates with the mitochondrial contact site and cristae organizing system (MICOS) complex, composed of at least MICOS10/MIC10, CHCHD3/MIC19, CHCHD6/MIC25, APOOL/MIC27, IMMT/MIC60, APOO/MIC23/MIC26 and QIL1/MIC13. This complex was also known under the names MINOS or MitOS complex. The MICOS complex associates with mitochondrial outer membrane proteins SAMM50, MTX1 and MTX2 (together described as components of the mitochondrial outer membrane sorting assembly machinery (SAM) complex) and DNAJC11, mitochondrial inner membrane protein TMEM11 and with HSPA9. The MICOS and SAM complexes together with DNAJC11 are part of a large protein complex spanning both membranes termed the mitochondrial intermembrane space bridging (MIB) complex. Interacts with IMMT/MIC60. Interacts with CHCHD3/MIC19. Interacts with ARMC1.

The protein localises to the mitochondrion outer membrane. It localises to the cytoplasm. The protein resides in the mitochondrion. Its function is as follows. Plays a crucial role in the maintenance of the structure of mitochondrial cristae and the proper assembly of the mitochondrial respiratory chain complexes. Required for the assembly of TOMM40 into the TOM complex. The polypeptide is Sorting and assembly machinery component 50 homolog (SAMM50) (Bos taurus (Bovine)).